A 234-amino-acid chain; its full sequence is FAS1 domain-containing protein AFUA_8G05360 (234 aa).

The first 21 residues, 1–21 (MRRTLFVLFVVAFCFIGSVIA), serve as a signal peptide directing secretion. The region spanning 83 to 231 (KPVVSDVLPK…GELWILNSVL (149 aa)) is the FAS1 domain.

It localises to the vacuole. The sequence is that of FAS1 domain-containing protein AFUA_8G05360 from Aspergillus fumigatus (strain ATCC MYA-4609 / CBS 101355 / FGSC A1100 / Af293) (Neosartorya fumigata).